Reading from the N-terminus, the 289-residue chain is Segregation and condensation protein A (289 aa).

A compositionally biased stretch (basic and acidic residues) spans 1 to 18; sequence MSEDRRSPTDEAPREGEL. The disordered stretch occupies residues 1-24; that stretch reads MSEDRRSPTDEAPREGELPRSPGD.

The protein belongs to the ScpA family. As to quaternary structure, component of the Structural Maintenance of Chromosome (SMC) condensin-like complex composed of ScpA, ScpB and the Smc homodimer. ScpA and ScpB bind to the head domain of Smc. The presence of the three proteins is required for the association of the complex with DNA.

It is found in the cytoplasm. Its function is as follows. A conditionally essential component of the chromosome segregation machinery. Participates in chromosomal partition during cell division. Important for positioning of ParB-parS complexes (ori of replication) and of the ter replication site, as well as for segration of the ParB-parS complex and thus chromosome segregation. May act via the formation of a condensin-like complex containing Smc, ScpA and ScpB that pulls DNA away from mid-cell into both cell halves. This Myxococcus xanthus (strain DK1622) protein is Segregation and condensation protein A.